Reading from the N-terminus, the 178-residue chain is Crossover junction endodeoxyribonuclease RuvC (178 aa).

Residues Asp11, Glu71, and Asp143 contribute to the active site. Mg(2+) is bound by residues Asp11, Glu71, and Asp143.

Belongs to the RuvC family. Homodimer which binds Holliday junction (HJ) DNA. The HJ becomes 2-fold symmetrical on binding to RuvC with unstacked arms; it has a different conformation from HJ DNA in complex with RuvA. In the full resolvosome a probable DNA-RuvA(4)-RuvB(12)-RuvC(2) complex forms which resolves the HJ. Mg(2+) is required as a cofactor.

It is found in the cytoplasm. It carries out the reaction Endonucleolytic cleavage at a junction such as a reciprocal single-stranded crossover between two homologous DNA duplexes (Holliday junction).. In terms of biological role, the RuvA-RuvB-RuvC complex processes Holliday junction (HJ) DNA during genetic recombination and DNA repair. Endonuclease that resolves HJ intermediates. Cleaves cruciform DNA by making single-stranded nicks across the HJ at symmetrical positions within the homologous arms, yielding a 5'-phosphate and a 3'-hydroxyl group; requires a central core of homology in the junction. The consensus cleavage sequence is 5'-(A/T)TT(C/G)-3'. Cleavage occurs on the 3'-side of the TT dinucleotide at the point of strand exchange. HJ branch migration catalyzed by RuvA-RuvB allows RuvC to scan DNA until it finds its consensus sequence, where it cleaves and resolves the cruciform DNA. This is Crossover junction endodeoxyribonuclease RuvC from Neisseria meningitidis serogroup B (strain ATCC BAA-335 / MC58).